The following is a 320-amino-acid chain: Cytochrome c biogenesis protein CcsA (320 aa).

A run of 8 helical transmembrane segments spans residues 9–29 (ILAH…WGTL), 36–56 (LSSS…GLLI), 70–90 (LYES…LLEV), 97–117 (WLGA…TLGL), 143–163 (ILFS…LLVI), 227–247 (AIGL…IWAN), 254–274 (WSWD…AIYL), and 288–308 (AIVA…VNLL).

Belongs to the CcmF/CycK/Ccl1/NrfE/CcsA family. In terms of assembly, may interact with Ccs1.

It localises to the plastid. The protein resides in the chloroplast thylakoid membrane. In terms of biological role, required during biogenesis of c-type cytochromes (cytochrome c6 and cytochrome f) at the step of heme attachment. The protein is Cytochrome c biogenesis protein CcsA of Pinus thunbergii (Japanese black pine).